We begin with the raw amino-acid sequence, 282 residues long: uncharacterized protein (282 aa).

6 helical membrane-spanning segments follow: residues 18-38 (PIVL…WAGT), 40-60 (LLVV…VTIG), 87-107 (LWIV…TPVV), 119-139 (ALHF…GAMV), 164-184 (IPVD…PMLI), and 260-280 (VTLA…SLIL).

The protein belongs to the CbiQ family.

The protein localises to the cell membrane. This is an uncharacterized protein from Mycobacterium tuberculosis (strain CDC 1551 / Oshkosh).